Here is a 76-residue protein sequence, read N- to C-terminus: Putative membrane protein insertion efficiency factor (76 aa).

It belongs to the UPF0161 family.

The protein resides in the cell inner membrane. Could be involved in insertion of integral membrane proteins into the membrane. This Porphyromonas gingivalis (strain ATCC 33277 / DSM 20709 / CIP 103683 / JCM 12257 / NCTC 11834 / 2561) protein is Putative membrane protein insertion efficiency factor.